The primary structure comprises 90 residues: Small ribosomal subunit protein uS19 (90 aa).

It belongs to the universal ribosomal protein uS19 family.

Functionally, protein S19 forms a complex with S13 that binds strongly to the 16S ribosomal RNA. The chain is Small ribosomal subunit protein uS19 from Methylococcus capsulatus (strain ATCC 33009 / NCIMB 11132 / Bath).